An 882-amino-acid polypeptide reads, in one-letter code: Valine--tRNA ligase (882 aa).

The 'HIGH' region motif lies at 48–58 (PNVTGKLHLGH). The 'KMSKS' region motif lies at 524–528 (KMSKS). Lys-527 is an ATP binding site. Residues 809–882 (LAELLDLDEE…KRLAELKAAR (74 aa)) adopt a coiled-coil conformation. The tract at residues 844-866 (GFTDRAPEKVVQEERDKQADYEQ) is disordered. Residues 845 to 863 (FTDRAPEKVVQEERDKQAD) are compositionally biased toward basic and acidic residues.

The protein belongs to the class-I aminoacyl-tRNA synthetase family. ValS type 1 subfamily. Monomer.

The protein localises to the cytoplasm. It carries out the reaction tRNA(Val) + L-valine + ATP = L-valyl-tRNA(Val) + AMP + diphosphate. Its function is as follows. Catalyzes the attachment of valine to tRNA(Val). As ValRS can inadvertently accommodate and process structurally similar amino acids such as threonine, to avoid such errors, it has a 'posttransfer' editing activity that hydrolyzes mischarged Thr-tRNA(Val) in a tRNA-dependent manner. The protein is Valine--tRNA ligase of Latilactobacillus sakei subsp. sakei (strain 23K) (Lactobacillus sakei subsp. sakei).